The sequence spans 452 residues: Phosphoglucosamine mutase (452 aa).

The active-site Phosphoserine intermediate is the S97. Positions 97, 236, 238, and 240 each coordinate Mg(2+). Position 97 is a phosphoserine (S97).

Belongs to the phosphohexose mutase family. Requires Mg(2+) as cofactor. Activated by phosphorylation.

The enzyme catalyses alpha-D-glucosamine 1-phosphate = D-glucosamine 6-phosphate. Catalyzes the conversion of glucosamine-6-phosphate to glucosamine-1-phosphate. This is Phosphoglucosamine mutase from Prochlorococcus marinus subsp. pastoris (strain CCMP1986 / NIES-2087 / MED4).